Reading from the N-terminus, the 91-residue chain is Small ribosomal subunit protein bS18 (91 aa).

This sequence belongs to the bacterial ribosomal protein bS18 family. Part of the 30S ribosomal subunit. Forms a tight heterodimer with protein bS6.

Its function is as follows. Binds as a heterodimer with protein bS6 to the central domain of the 16S rRNA, where it helps stabilize the platform of the 30S subunit. The protein is Small ribosomal subunit protein bS18 of Paraburkholderia phytofirmans (strain DSM 17436 / LMG 22146 / PsJN) (Burkholderia phytofirmans).